The sequence spans 506 residues: Lysine--tRNA ligase (506 aa).

Mg(2+)-binding residues include E416 and E423.

This sequence belongs to the class-II aminoacyl-tRNA synthetase family. In terms of assembly, homodimer. Requires Mg(2+) as cofactor.

The protein resides in the cytoplasm. The enzyme catalyses tRNA(Lys) + L-lysine + ATP = L-lysyl-tRNA(Lys) + AMP + diphosphate. The protein is Lysine--tRNA ligase of Sodalis glossinidius (strain morsitans).